The primary structure comprises 348 residues: 4-hydroxy-3-methylbut-2-en-1-yl diphosphate synthase (flavodoxin) (348 aa).

[4Fe-4S] cluster contacts are provided by cysteine 263, cysteine 266, cysteine 298, and glutamate 305.

The protein belongs to the IspG family. The cofactor is [4Fe-4S] cluster.

It catalyses the reaction (2E)-4-hydroxy-3-methylbut-2-enyl diphosphate + oxidized [flavodoxin] + H2O + 2 H(+) = 2-C-methyl-D-erythritol 2,4-cyclic diphosphate + reduced [flavodoxin]. The protein operates within isoprenoid biosynthesis; isopentenyl diphosphate biosynthesis via DXP pathway; isopentenyl diphosphate from 1-deoxy-D-xylulose 5-phosphate: step 5/6. Converts 2C-methyl-D-erythritol 2,4-cyclodiphosphate (ME-2,4cPP) into 1-hydroxy-2-methyl-2-(E)-butenyl 4-diphosphate. The chain is 4-hydroxy-3-methylbut-2-en-1-yl diphosphate synthase (flavodoxin) from Dehalococcoides mccartyi (strain CBDB1).